The chain runs to 218 residues: Eukaryotic translation initiation factor 4E-1 (218 aa).

The span at 1–11 (MQTEQPPKESQ) shows a compositional bias: basic and acidic residues. 2 disordered regions span residues 1–20 (MQTE…SEPQ) and 198–218 (FSAH…RMSV). Positions 206 to 218 (KSGSTRAKTRMSV) are enriched in polar residues.

Belongs to the eukaryotic initiation factor 4E family. As to quaternary structure, eIF4F is a multi-subunit complex, the composition of which varies with external and internal environmental conditions. It is composed of at least eIF4A, eIF4E and eIF4G. eIF4E is also known to interact with other partners.

Functionally, recognizes and binds the 7-methylguanosine-containing mRNA cap during an early step in the initiation of protein synthesis and facilitates ribosome binding by inducing the unwinding of the mRNAs secondary structures. In Schizosaccharomyces pombe (strain 972 / ATCC 24843) (Fission yeast), this protein is Eukaryotic translation initiation factor 4E-1 (tif451).